The chain runs to 367 residues: 5-amino-6-(D-ribitylamino)uracil--L-tyrosine 4-hydroxyphenyl transferase (367 aa).

In terms of domain architecture, Radical SAM core spans 56–290; it reads VTYVRNQNIN…MFAVARLFLD (235 aa). Cys-70, Cys-74, and Cys-77 together coordinate [4Fe-4S] cluster.

This sequence belongs to the radical SAM superfamily. CofH family. As to quaternary structure, consists of two subunits, CofG and CofH. [4Fe-4S] cluster serves as cofactor.

The enzyme catalyses 5-amino-6-(D-ribitylamino)uracil + L-tyrosine + S-adenosyl-L-methionine = 5-amino-5-(4-hydroxybenzyl)-6-(D-ribitylimino)-5,6-dihydrouracil + 2-iminoacetate + 5'-deoxyadenosine + L-methionine + H(+). Its pathway is cofactor biosynthesis; coenzyme F0 biosynthesis. Its function is as follows. Catalyzes the radical-mediated synthesis of 5-amino-5-(4-hydroxybenzyl)-6-(D-ribitylimino)-5,6-dihydrouracil from 5-amino-6-(D-ribitylamino)uracil and L-tyrosine. The polypeptide is 5-amino-6-(D-ribitylamino)uracil--L-tyrosine 4-hydroxyphenyl transferase (Methanoculleus marisnigri (strain ATCC 35101 / DSM 1498 / JR1)).